The chain runs to 163 residues: MAATVKQHVQLALSLPPRLRTFLARYPPASILPAGADPETHKTPYQEESPNPFMPTKHPITGKWHNPKYSLRRQAELVKLAQEHGVEELLPFTRKLNEEKLRKRVELGLRVKGTGVGEKVKGHKHERTLVAKMEKRREAMLAMPDLIREWKKVGKRNWTKFPK.

A disordered region spans residues 33–53; that stretch reads PAGADPETHKTPYQEESPNPF.

Belongs to the mitochondrion-specific ribosomal protein mL59 family. In terms of assembly, component of the mitochondrial large ribosomal subunit (mt-LSU). Mature N.crassa 74S mitochondrial ribosomes consist of a small (37S) and a large (54S) subunit. The 37S small subunit contains a 16S ribosomal RNA (16S mt-rRNA) and 32 different proteins. The 54S large subunit contains a 23S rRNA (23S mt-rRNA) and 42 different proteins.

The protein localises to the mitochondrion. Functionally, component of the mitochondrial ribosome (mitoribosome), a dedicated translation machinery responsible for the synthesis of mitochondrial genome-encoded proteins, including at least some of the essential transmembrane subunits of the mitochondrial respiratory chain. The mitoribosomes are attached to the mitochondrial inner membrane and translation products are cotranslationally integrated into the membrane. This chain is Large ribosomal subunit protein mL59 (mrpl25), found in Neurospora crassa (strain ATCC 24698 / 74-OR23-1A / CBS 708.71 / DSM 1257 / FGSC 987).